Reading from the N-terminus, the 275-residue chain is Ribosomal RNA small subunit methyltransferase A (275 aa).

Positions 19, 21, 46, 71, 94, and 117 each coordinate S-adenosyl-L-methionine.

The protein belongs to the class I-like SAM-binding methyltransferase superfamily. rRNA adenine N(6)-methyltransferase family. RsmA subfamily.

It is found in the cytoplasm. The catalysed reaction is adenosine(1518)/adenosine(1519) in 16S rRNA + 4 S-adenosyl-L-methionine = N(6)-dimethyladenosine(1518)/N(6)-dimethyladenosine(1519) in 16S rRNA + 4 S-adenosyl-L-homocysteine + 4 H(+). In terms of biological role, specifically dimethylates two adjacent adenosines (A1518 and A1519) in the loop of a conserved hairpin near the 3'-end of 16S rRNA in the 30S particle. May play a critical role in biogenesis of 30S subunits. The protein is Ribosomal RNA small subunit methyltransferase A of Burkholderia thailandensis (strain ATCC 700388 / DSM 13276 / CCUG 48851 / CIP 106301 / E264).